Reading from the N-terminus, the 547-residue chain is Chaperonin GroEL (547 aa).

Residues 30–33 (TLGP), Lys-51, 87–91 (DGTTT), Gly-415, 478–480 (NAA), and Asp-494 contribute to the ATP site.

The protein belongs to the chaperonin (HSP60) family. As to quaternary structure, forms a cylinder of 14 subunits composed of two heptameric rings stacked back-to-back. Interacts with the co-chaperonin GroES.

The protein resides in the cytoplasm. The enzyme catalyses ATP + H2O + a folded polypeptide = ADP + phosphate + an unfolded polypeptide.. In terms of biological role, together with its co-chaperonin GroES, plays an essential role in assisting protein folding. The GroEL-GroES system forms a nano-cage that allows encapsulation of the non-native substrate proteins and provides a physical environment optimized to promote and accelerate protein folding. The chain is Chaperonin GroEL from Geobacter sp. (strain M21).